A 137-amino-acid polypeptide reads, in one-letter code: Ribosomal RNA large subunit methyltransferase H (137 aa).

S-adenosyl-L-methionine contacts are provided by residues L56, G85, and 104–109 (LSPLTF).

Belongs to the RNA methyltransferase RlmH family. Homodimer.

The protein localises to the cytoplasm. The enzyme catalyses pseudouridine(1915) in 23S rRNA + S-adenosyl-L-methionine = N(3)-methylpseudouridine(1915) in 23S rRNA + S-adenosyl-L-homocysteine + H(+). In terms of biological role, specifically methylates the pseudouridine at position 1915 (m3Psi1915) in 23S rRNA. In Prochlorococcus marinus subsp. pastoris (strain CCMP1986 / NIES-2087 / MED4), this protein is Ribosomal RNA large subunit methyltransferase H.